A 384-amino-acid chain; its full sequence is GTPase Obg (384 aa).

Residues 1 to 159 (MKFIDEAKIE…RSLQLELKVL (159 aa)) form the Obg domain. Disordered stretches follow at residues 20–46 (ATSFRREKFVPRGGPDGGDGGKGGSVW) and 129–149 (HFKSSVNRAPKQSTPGEEGET). The span at 33–43 (GPDGGDGGKGG) shows a compositional bias: gly residues. Polar residues predominate over residues 130 to 143 (FKSSVNRAPKQSTP). The OBG-type G domain occupies 160–348 (ADVGLLGMPN…LVHQINQYLA (189 aa)). GTP-binding positions include 166–173 (GMPNAGKS), 191–195 (FTTLH), 213–216 (DIPG), 284–287 (NKLD), and 329–331 (SAL). Residues Ser-173 and Thr-193 each coordinate Mg(2+).

It belongs to the TRAFAC class OBG-HflX-like GTPase superfamily. OBG GTPase family. In terms of assembly, monomer. Mg(2+) serves as cofactor.

The protein resides in the cytoplasm. In terms of biological role, an essential GTPase which binds GTP, GDP and possibly (p)ppGpp with moderate affinity, with high nucleotide exchange rates and a fairly low GTP hydrolysis rate; the half-life of the GTP-bound state is about 50 minutes. Plays a role in control of the cell cycle, stress response, ribosome biogenesis and in those bacteria that undergo differentiation, in morphogenesis control. The chain is GTPase Obg from Neisseria gonorrhoeae (strain ATCC 700825 / FA 1090).